Reading from the N-terminus, the 174-residue chain is Bifunctional protein PyrR 2 (174 aa).

Residues 39 to 40, 100 to 108, and arginine 133 contribute to the substrate site; these read TR and DDVLFTGRT. A PRPP-binding motif is present at residues 96–108; sequence VILVDDVLFTGRT.

Belongs to the purine/pyrimidine phosphoribosyltransferase family. PyrR subfamily. In terms of assembly, homodimer and homohexamer; in equilibrium.

It carries out the reaction UMP + diphosphate = 5-phospho-alpha-D-ribose 1-diphosphate + uracil. Its function is as follows. Regulates transcriptional attenuation of the pyrimidine nucleotide (pyr) operon by binding in a uridine-dependent manner to specific sites on pyr mRNA. This disrupts an antiterminator hairpin in the RNA and favors formation of a downstream transcription terminator, leading to a reduced expression of downstream genes. Functionally, also displays a weak uracil phosphoribosyltransferase activity which is not physiologically significant. The protein is Bifunctional protein PyrR 2 (pyrR2) of Lactiplantibacillus plantarum (strain ATCC BAA-793 / NCIMB 8826 / WCFS1) (Lactobacillus plantarum).